We begin with the raw amino-acid sequence, 500 residues long: L-arabinose isomerase (500 aa).

Mn(2+) is bound by residues Glu-306, Glu-333, His-350, and His-450.

Belongs to the arabinose isomerase family. Homohexamer. Mn(2+) serves as cofactor.

The enzyme catalyses beta-L-arabinopyranose = L-ribulose. Its pathway is carbohydrate degradation; L-arabinose degradation via L-ribulose; D-xylulose 5-phosphate from L-arabinose (bacterial route): step 1/3. In terms of biological role, catalyzes the conversion of L-arabinose to L-ribulose. This chain is L-arabinose isomerase, found in Enterobacter sp. (strain 638).